The primary structure comprises 167 residues: Protein-export protein SecB (167 aa).

A disordered region spans residues 1-20 (MASNDDAPVGAANGNGNTGA).

The protein belongs to the SecB family. In terms of assembly, homotetramer, a dimer of dimers. One homotetramer interacts with 1 SecA dimer.

Its subcellular location is the cytoplasm. Functionally, one of the proteins required for the normal export of preproteins out of the cell cytoplasm. It is a molecular chaperone that binds to a subset of precursor proteins, maintaining them in a translocation-competent state. It also specifically binds to its receptor SecA. In Mesorhizobium japonicum (strain LMG 29417 / CECT 9101 / MAFF 303099) (Mesorhizobium loti (strain MAFF 303099)), this protein is Protein-export protein SecB.